The following is a 368-amino-acid chain: H-2 class I histocompatibility antigen, D-P alpha chain (368 aa).

An N-terminal signal peptide occupies residues 1–21 (MAPRTLLLLLAAALAPTQTRA). An alpha-1 region spans residues 22–111 (GPHSLRYFVT…LLGYYNQSKG (90 aa)). Topologically, residues 22–303 (GPHSLRYFVT…RWEPPPSTDS (282 aa)) are extracellular. A glycan (N-linked (GlcNAc...) asparagine) is linked at Asn-107. The interval 112 to 203 (GSHTIQGMRG…ELGNATLLCT (92 aa)) is alpha-2. A disulfide bond links Cys-122 and Cys-185. N-linked (GlcNAc...) asparagine glycosylation is found at Asn-197 and Asn-277. The tract at residues 204–295 (DPPKAHVTHH…GLPEPLTLRW (92 aa)) is alpha-3. In terms of domain architecture, Ig-like C1-type spans 206–294 (PKAHVTHHPR…EGLPEPLTLR (89 aa)). Residues Cys-224 and Cys-280 are joined by a disulfide bond. A connecting peptide region spans residues 296-303 (EPPPSTDS). The chain crosses the membrane as a helical span at residues 304 to 330 (YMVIVAVLVVLGAVFIIGAVVAFVMMM). The Cytoplasmic portion of the chain corresponds to 331–368 (RRNTGGKGGDYTLAPGSQSSEMSLRDCKVMVHDSHSLA). Ser-350 and Ser-353 each carry phosphoserine.

It belongs to the MHC class I family. As to quaternary structure, heterodimer of an alpha chain and a beta chain (beta-2-microglobulin).

The protein resides in the membrane. Its function is as follows. Involved in the presentation of foreign antigens to the immune system. The chain is H-2 class I histocompatibility antigen, D-P alpha chain (H2-D1) from Mus musculus (Mouse).